The following is a 219-amino-acid chain: MGQKVNPHGLRVGVINDWDSRWYAEADFADNLVEDYNIRTYLKKKLYSAGVAKIEIERASDKLKVIIHTAKPGVVIGKGGAEIEKLKVEITQYTTKKLNLEIKEIKKPDVCAQLVAESIAAQLENRISFRRAMKSTMSRTMRSGAKGIKTAVSGRLGGADMARTEFYSEGTIPLQTLRADIDYGFAEADTTFGKLGVKAWIYHGEVLPTKGNKKEGSDK.

The region spanning 38–106 (IRTYLKKKLY…KLNLEIKEIK (69 aa)) is the KH type-2 domain.

It belongs to the universal ribosomal protein uS3 family. In terms of assembly, part of the 30S ribosomal subunit. Forms a tight complex with proteins S10 and S14.

Binds the lower part of the 30S subunit head. Binds mRNA in the 70S ribosome, positioning it for translation. In Lachnoclostridium phytofermentans (strain ATCC 700394 / DSM 18823 / ISDg) (Clostridium phytofermentans), this protein is Small ribosomal subunit protein uS3.